Here is a 144-residue protein sequence, read N- to C-terminus: Mediator of RNA polymerase II transcription subunit 21 (144 aa).

Belongs to the Mediator complex subunit 21 family. In terms of assembly, component of the Mediator complex, which is composed of MED1, MED4, MED6, MED7, MED8, MED9, MED10, MED11, MED12, MED13, MED13L, MED14, MED15, MED16, MED17, MED18, MED19, MED20, MED21, MED22, MED23, MED24, MED25, MED26, MED27, MED29, MED30, MED31, CCNC, CDK8 and CDC2L6/CDK11. The MED12, MED13, CCNC and CDK8 subunits form a distinct module termed the CDK8 module. Mediator containing the CDK8 module is less active than Mediator lacking this module in supporting transcriptional activation. Individual preparations of the Mediator complex lacking one or more distinct subunits have been variously termed ARC, CRSP, DRIP, PC2, SMCC and TRAP. Interacts with PPARG. Interacts with THRA in a ligand-dependent fashion.

The protein resides in the nucleus. Component of the Mediator complex, a coactivator involved in the regulated transcription of nearly all RNA polymerase II-dependent genes. Mediator functions as a bridge to convey information from gene-specific regulatory proteins to the basal RNA polymerase II transcription machinery. Mediator is recruited to promoters by direct interactions with regulatory proteins and serves as a scaffold for the assembly of a functional preinitiation complex with RNA polymerase II and the general transcription factors. The protein is Mediator of RNA polymerase II transcription subunit 21 (MED21) of Pongo abelii (Sumatran orangutan).